We begin with the raw amino-acid sequence, 1368 residues long: DNA-directed RNA polymerase subunit beta' (1368 aa).

Residues 1–38 (MTSSSKPARKTSKSKSKASKAAEAPAAPSNELSREAPT) form a disordered region. The segment covering 7–18 (PARKTSKSKSKA) has biased composition (basic residues). Low complexity predominate over residues 19–29 (SKAAEAPAAPS). 4 residues coordinate Zn(2+): C250, C318, C325, and C328. The disordered stretch occupies residues 1340 to 1368 (AGEELAEEHVPDPGALEGLQEEGLLSQDS). The span at 1353–1368 (GALEGLQEEGLLSQDS) shows a compositional bias: low complexity.

Belongs to the RNA polymerase beta' chain family. RpoC2 subfamily. As to quaternary structure, in cyanobacteria the RNAP catalytic core is composed of 2 alpha, 1 beta, 1 beta', 1 gamma and 1 omega subunit. When a sigma factor is associated with the core the holoenzyme is formed, which can initiate transcription. Requires Zn(2+) as cofactor.

The enzyme catalyses RNA(n) + a ribonucleoside 5'-triphosphate = RNA(n+1) + diphosphate. In terms of biological role, DNA-dependent RNA polymerase catalyzes the transcription of DNA into RNA using the four ribonucleoside triphosphates as substrates. This is DNA-directed RNA polymerase subunit beta' from Synechococcus sp. (strain RCC307).